We begin with the raw amino-acid sequence, 511 residues long: 2-isopropylmalate synthase (511 aa).

In terms of domain architecture, Pyruvate carboxyltransferase spans 5-267 (LIIFDTTLRD…DTNIDTMHIL (263 aa)). Residues D14, H202, H204, and N238 each coordinate Mn(2+). The interval 393–511 (KLVSLKVCTE…TVTNKAHPQI (119 aa)) is regulatory domain.

It belongs to the alpha-IPM synthase/homocitrate synthase family. LeuA type 1 subfamily. As to quaternary structure, homodimer. Mn(2+) is required as a cofactor.

The protein localises to the cytoplasm. It catalyses the reaction 3-methyl-2-oxobutanoate + acetyl-CoA + H2O = (2S)-2-isopropylmalate + CoA + H(+). The protein operates within amino-acid biosynthesis; L-leucine biosynthesis; L-leucine from 3-methyl-2-oxobutanoate: step 1/4. Its function is as follows. Catalyzes the condensation of the acetyl group of acetyl-CoA with 3-methyl-2-oxobutanoate (2-ketoisovalerate) to form 3-carboxy-3-hydroxy-4-methylpentanoate (2-isopropylmalate). The chain is 2-isopropylmalate synthase from Vesicomyosocius okutanii subsp. Calyptogena okutanii (strain HA).